The chain runs to 414 residues: Isocitrate dehydrogenase [NADP] cytoplasmic (414 aa).

Ser2 bears the N-acetylserine mark. Position 42 is a phosphotyrosine (Tyr42). 75–77 contacts NADP(+); sequence TIT. Thr77 lines the substrate pocket. Position 81 is an N6-acetyllysine (Lys81). Residue Arg82 coordinates NADP(+). Substrate is bound by residues 94–100 and Arg109; that span reads SPNGTIR. Lys126 bears the N6-succinyllysine mark. Positions 132 and 212 each coordinate substrate. N6-acetyllysine is present on residues Lys224, Lys233, and Lys243. Residue Asp252 coordinates Mn(2+). Lys260 contacts NADP(+). Mn(2+) contacts are provided by Asp275 and Asp279. Position 310–315 (310–315) interacts with NADP(+); that stretch reads GTVTRH. At Lys321 the chain carries N6-acetyllysine. Asn328 lines the NADP(+) pocket. Ser389 bears the Phosphoserine mark. At Lys400 the chain carries N6-succinyllysine.

This sequence belongs to the isocitrate and isopropylmalate dehydrogenases family. As to quaternary structure, homodimer. The cofactor is Mg(2+). Mn(2+) serves as cofactor. Acetylation at Lys-374 dramatically reduces catalytic activity.

The protein resides in the cytoplasm. The protein localises to the cytosol. It is found in the peroxisome. It catalyses the reaction D-threo-isocitrate + NADP(+) = 2-oxoglutarate + CO2 + NADPH. Catalyzes the NADP(+)-dependent oxidative decarboxylation of isocitrate (D-threo-isocitrate) to 2-ketoglutarate (2-oxoglutarate), which is required by other enzymes such as the phytanoyl-CoA dioxygenase. Plays a critical role in the generation of NADPH, an important cofactor in many biosynthesis pathways. May act as a corneal epithelial crystallin and may be involved in maintaining corneal epithelial transparency. The chain is Isocitrate dehydrogenase [NADP] cytoplasmic (IDH1) from Homo sapiens (Human).